The chain runs to 698 residues: Sucrose non-fermenting protein kinase 1 (698 aa).

Residues 1-48 are disordered; sequence MAPRGFEDEELTISLSSSHVRRPQQQQPPPPTQQQHAHQPGSRPADAP. Residues 62-313 form the Protein kinase domain; sequence YKVLRTLGEG…IEDIRADPWF (252 aa). ATP-binding positions include 68 to 76 and K91; that span reads LGEGSFGKV. Catalysis depends on D184, which acts as the Proton acceptor. Residues 320–417 form an auto-inhibitory domain (AID) region; that stretch reads YLQLPVEEFF…ALLEPEGSSP (98 aa). Residues 360 to 397 form the UBA domain; that stretch reads VTEKISKTMGYGKNDVEEALQASEPSAIKDAYMIVREN. 3 disordered regions span residues 410 to 435, 482 to 525, and 564 to 597; these read LEPE…TTTA, TRTD…KKTK, and ESRH…IDPM. Residues 415–435 are compositionally biased toward low complexity; the sequence is SSPMLSMSSARSATSTTTTTA. Composition is skewed to basic and acidic residues over residues 484–493 and 564–573; these read TDAEKEETSR and ESRHAEERAE.

This sequence belongs to the protein kinase superfamily. CAMK Ser/Thr protein kinase family. SNF1 subfamily. As to quaternary structure, component of the AMP-activated protein kinase complex also known as the SNF1 kinase complex (Snf1c), a heterotrimeric complex composed of a catalytic subunit alpha and 2 regulatory subunits beta and gamma.

It is found in the cytoplasm. Its subcellular location is the nucleus. It catalyses the reaction L-seryl-[protein] + ATP = O-phospho-L-seryl-[protein] + ADP + H(+). The enzyme catalyses L-threonyl-[protein] + ATP = O-phospho-L-threonyl-[protein] + ADP + H(+). Functionally, catalytic subunit of the AMP-activated protein kinase complex also known as the SNF1 kinase complex (Snf1c), a central regulator of cellular energy homeostasis, which, in response to a fall in intracellular ATP levels, activates energy-producing pathways and inhibits energy-consuming processes. The complex phosphorylates histone H3 to form H3S10ph, which promotes H3K14ac formation, leading to transcriptional activation through TBP recruitment to the promoters. Activates the expression of the galactose oxidase (GOA) gene and of several cell wall-degrading enzymes (CWDEs) such as pectate lyase, xylanase and glucanase. Plays an important role in sudden death syndrome (SDS) by controlling the colonization of the infected roots. This chain is Sucrose non-fermenting protein kinase 1, found in Fusarium virguliforme.